The primary structure comprises 558 residues: Atlastin-1 (558 aa).

A disordered region spans residues 1–27 (MAKNRRDRNSWGGFSEKTYEWSSEEEE). The tract at residues 1–34 (MAKNRRDRNSWGGFSEKTYEWSSEEEEPVKKAGP) is N-terminal hypervariable region (HVR). The Cytoplasmic segment spans residues 1–449 (MAKNRRDRNS…NIFHAARTPA (449 aa)). Phosphoserine is present on residues Ser10, Ser22, and Ser23. Positions 64-309 (DKEVVAVSVA…LIPWLLSPES (246 aa)) constitute a GB1/RHD3-type G domain. GDP-binding residues include Arg77, Lys78, Gly79, Lys80, Ser81, Phe82, Gln148, Arg217, Asp218, Val276, and Asn279. Residues Arg77, Lys78, Gly79, Lys80, Ser81, and Phe82 each contribute to the GTP site. Position 81 (Ser81) interacts with Mg(2+). GTP-binding residues include Arg217, Asp218, and Val276. Residues 347–438 (MLQATAEANN…YIQYIKHNDS (92 aa)) are 3HB (three-helix bundle) domain. Lys395 carries the post-translational modification N6-acetyllysine. Positions 412-439 (EFSRRYLQQLESEIDELYIQYIKHNDSK) form a coiled coil. The linker stretch occupies residues 439-447 (KNIFHAART). The helical transmembrane segment at 450–470 (TLFVVIFITYVIAGVTGFIGL) threads the bilayer. Asp471 is a topological domain (lumenal). Residues 472–492 (IIASLCNMIMGLTLITLCTWA) form a helical membrane-spanning segment. At 493–558 (YIRYSGEYRE…STEQSEKKKM (66 aa)) the chain is on the cytoplasmic side. Residues 521 to 558 (NEALYKLYSAAATHRHLYHQAFPTPKSESTEQSEKKKM) form an autoinhibitory domain region.

Belongs to the TRAFAC class dynamin-like GTPase superfamily. GB1/RHD3 GTPase family. GB1 subfamily. As to quaternary structure, monomeric and homodimeric. The homodimer, transiently formed by two molecules on opposing membranes, is the active form mediating ER membrane fusion. Interacts with REEP1, REEP5, RTN3 and RTN4 (via the transmembrane region); these proteins are involved in endoplasmic reticulum tubular network organization. Interacts with ZFYVE27; both proteins are involved in endoplasmic reticulum tubular network organization. Interacts with ARL6IP1; both proteins are involved in endoplasmic reticulum tubular network organization. Interacts with SPAST; the interaction is direct, could recruit SPAST to Golgi membranes. Interacts (via N-terminal region) with MAP4K4 (via CNH regulatory domain). May interact with TMED2. Interacts with CPT1C. Post-translationally, phosphorylated. Phosphorylation, by different kinases, of the N-terminal hypervariable region (HVR) regulates the ATL1-mediated membrane tethering step.

Its subcellular location is the endoplasmic reticulum membrane. The protein resides in the golgi apparatus membrane. It is found in the cell projection. The protein localises to the axon. It carries out the reaction GTP + H2O = GDP + phosphate + H(+). Its function is as follows. Atlastin-1 (ATL1) is a membrane-anchored GTPase that mediates the GTP-dependent fusion of endoplasmic reticulum (ER) membranes, maintaining the continuous ER network. It facilitates the formation of three-way junctions where ER tubules intersect. Two atlastin-1 on neighboring ER tubules bind GTP and form loose homodimers through the GB1/RHD3-type G domains and 3HB regions. Upon GTP hydrolysis, the 3HB regions tighten, pulling the membranes together to drive their fusion. After fusion, the homodimer disassembles upon release of inorganic phosphate (Pi). Subsequently, GDP dissociates, resetting the monomers to a conformation ready for a new fusion cycle. May also regulate more or less directly Golgi biogenesis. Indirectly regulates axonal development. The polypeptide is Atlastin-1 (Macaca fascicularis (Crab-eating macaque)).